The chain runs to 156 residues: Small ribosomal subunit protein uS7 (156 aa).

Belongs to the universal ribosomal protein uS7 family. Part of the 30S ribosomal subunit. Contacts proteins S9 and S11.

In terms of biological role, one of the primary rRNA binding proteins, it binds directly to 16S rRNA where it nucleates assembly of the head domain of the 30S subunit. Is located at the subunit interface close to the decoding center, probably blocks exit of the E-site tRNA. This chain is Small ribosomal subunit protein uS7, found in Deinococcus geothermalis (strain DSM 11300 / CIP 105573 / AG-3a).